The primary structure comprises 131 residues: Large ribosomal subunit protein bL17 (131 aa).

It belongs to the bacterial ribosomal protein bL17 family. In terms of assembly, part of the 50S ribosomal subunit. Contacts protein L32.

In Paraburkholderia phymatum (strain DSM 17167 / CIP 108236 / LMG 21445 / STM815) (Burkholderia phymatum), this protein is Large ribosomal subunit protein bL17.